Consider the following 365-residue polypeptide: Spermine synthase (365 aa).

The residue at position 2 (A2) is an N-acetylalanine. A Phosphoserine modification is found at S57. A PABS domain is found at 121–361 (RYWPTADGRL…ELWVFYTVWK (241 aa)). S-adenosyl 3-(methylsulfanyl)propylamine is bound at residue Q147. Residues Y176 and D200 each contribute to the spermidine site. S-adenosyl 3-(methylsulfanyl)propylamine contacts are provided by residues E219 and 254-255 (DC). The active-site Proton acceptor is the D275. Spermidine-binding residues include Y350 and E352.

The protein belongs to the spermidine/spermine synthase family. Homodimer. Dimerization is mediated through the N-terminal domain and seems to be required for activity as deletion of the N-terminal domain causes complete loss of activity.

The enzyme catalyses S-adenosyl 3-(methylsulfanyl)propylamine + spermidine = spermine + S-methyl-5'-thioadenosine + H(+). The protein operates within amine and polyamine biosynthesis; spermine biosynthesis; spermine from spermidine: step 1/1. Catalyzes the production of spermine from spermidine and decarboxylated S-adenosylmethionine (dcSAM). The sequence is that of Spermine synthase (SMS) from Bos taurus (Bovine).